Here is a 189-residue protein sequence, read N- to C-terminus: MSPKERIIMGVDPGTILMGYGMLHVVGNTPRLMAMGVIRLEKFDNHYIRLKRIFDRITGLIDEFLPDEMAIEAPFFGKNVQSMLKLGRAQGVAMAAALARDIPITEYAPMRIKQAITGNGNASKEQVAGMLQRYLRIPDEQMLPEMDATDGLAAAVCHFFQTSGPMARSGGSAVKNWKDFVNRNPDKVR.

Catalysis depends on residues Asp12, Glu72, and Asp147. 3 residues coordinate Mg(2+): Asp12, Glu72, and Asp147.

Belongs to the RuvC family. As to quaternary structure, homodimer which binds Holliday junction (HJ) DNA. The HJ becomes 2-fold symmetrical on binding to RuvC with unstacked arms; it has a different conformation from HJ DNA in complex with RuvA. In the full resolvosome a probable DNA-RuvA(4)-RuvB(12)-RuvC(2) complex forms which resolves the HJ. It depends on Mg(2+) as a cofactor.

The protein resides in the cytoplasm. The catalysed reaction is Endonucleolytic cleavage at a junction such as a reciprocal single-stranded crossover between two homologous DNA duplexes (Holliday junction).. The RuvA-RuvB-RuvC complex processes Holliday junction (HJ) DNA during genetic recombination and DNA repair. Endonuclease that resolves HJ intermediates. Cleaves cruciform DNA by making single-stranded nicks across the HJ at symmetrical positions within the homologous arms, yielding a 5'-phosphate and a 3'-hydroxyl group; requires a central core of homology in the junction. The consensus cleavage sequence is 5'-(A/T)TT(C/G)-3'. Cleavage occurs on the 3'-side of the TT dinucleotide at the point of strand exchange. HJ branch migration catalyzed by RuvA-RuvB allows RuvC to scan DNA until it finds its consensus sequence, where it cleaves and resolves the cruciform DNA. This Porphyromonas gingivalis (strain ATCC BAA-308 / W83) protein is Crossover junction endodeoxyribonuclease RuvC.